Here is a 120-residue protein sequence, read N- to C-terminus: Ribosome-binding factor A (120 aa).

It belongs to the RbfA family. In terms of assembly, monomer. Binds 30S ribosomal subunits, but not 50S ribosomal subunits or 70S ribosomes.

The protein localises to the cytoplasm. Functionally, one of several proteins that assist in the late maturation steps of the functional core of the 30S ribosomal subunit. Associates with free 30S ribosomal subunits (but not with 30S subunits that are part of 70S ribosomes or polysomes). Required for efficient processing of 16S rRNA. May interact with the 5'-terminal helix region of 16S rRNA. The sequence is that of Ribosome-binding factor A from Rickettsia africae (strain ESF-5).